We begin with the raw amino-acid sequence, 886 residues long: Putative respiratory burst oxidase homolog protein H (886 aa).

2 disordered regions span residues 1 to 46 (MKSN…KKNA) and 64 to 103 (WRKSGNLGSPSTRKSGNLGPPTNAVPKKTGPQRVERTTSS). Topologically, residues 1-316 (MKSNTPTEDS…AELMHENWKK (316 aa)) are cytoplasmic. Polar residues predominate over residues 64-78 (WRKSGNLGSPSTRKS). EF-hand-like stretches follow at residues 137 to 145 (SVDGKLPKE) and 171 to 183 (RQIETENGIDKEQ). 2 consecutive EF-hand domains span residues 195–230 (DLDCRLQIFFDMCDKNGDGKLTEEEVKEVIVLSASA) and 239–274 (NAAAYASLIMEELDPDHKGYIEMWQLEILLTGMVTN). Residues Asp208, Asn210, Asp212, Lys214, and Glu219 each contribute to the Ca(2+) site. A Phosphoserine modification is found at Ser283. Residues 317 to 337 (LWVLALWAIINVYLFMWKYEE) traverse the membrane as a helical segment. At 338–404 (FMRNPLYNIT…INFHKVIAYM (67 aa)) the chain is on the extracellular side. A Ferric oxidoreductase domain is found at 355 to 512 (KGAAETLKLN…LLVLAYILLI (158 aa)). A helical membrane pass occupies residues 405–421 (IAFQALLHTALHIFCNY). At 422–456 (PRLSSCSYDVFLTYAGAALGNTQPSYLGLMLTSVS) the chain is on the cytoplasmic side. Residues 457-477 (ITGVLMIFFMGFSFTLAMHYF) form a helical membrane-spanning segment. Residues 478–499 (RRNIVKLPKPFNVLAGFNAFWY) lie on the Extracellular side of the membrane. Residues 500 to 520 (AHHLLVLAYILLIIHGYYLII) traverse the membrane as a helical segment. Residues 521–528 (EKPWYQKT) are Cytoplasmic-facing. A helical transmembrane segment spans residues 529 to 546 (TWMYLAVPMLFYASERLF). Topologically, residues 547–688 (SRLLQEHSHR…PYGAPAQNYQ (142 aa)) are extracellular. Positions 552–686 (EHSHRVNVIK…KGPYGAPAQN (135 aa)) constitute an FAD-binding FR-type domain. The chain crosses the membrane as a helical span at residues 689-709 (KFDILLLVGLGIGATPFISIL). Over 710-886 (KDMLNHLKPG…TRFTFHKENF (177 aa)) the chain is Cytoplasmic.

It belongs to the RBOH (TC 5.B.1.3) family. As to quaternary structure, monomer and homodimer.

The protein localises to the membrane. In terms of biological role, calcium-dependent NADPH oxidase that generates superoxide. This Arabidopsis thaliana (Mouse-ear cress) protein is Putative respiratory burst oxidase homolog protein H (RBOHH).